Consider the following 1377-residue polypeptide: Endoribonuclease Dicer homolog 2b (1377 aa).

Positions 1–15 (MGGPLTAAGGRGDGG) are enriched in gly residues. A disordered region spans residues 1–30 (MGGPLTAAGGRGDGGAKAVEPLRPPPPPDP). The region spanning 41 to 222 (ALERAVRGNT…HNYSKQISEI (182 aa)) is the Helicase ATP-binding domain. 54 to 61 (LETGSGKT) is an ATP binding site. A DECH box motif is present at residues 163-166 (DECH). The Helicase C-terminal domain occupies 388 to 561 (TLLQYRHMQD…DTYYRVESTP (174 aa)). In terms of domain architecture, Dicer dsRNA-binding fold spans 534–626 (SLRLGSISCQ…LPELDVPCDE (93 aa)). Positions 798 to 913 (RDIDLLQTKD…LPPELCRIIM (116 aa)) constitute a PAZ domain. 2 consecutive RNase III domains span residues 940–1095 (SVKL…STAG) and 1132–1276 (VRSL…LDSK). 3 residues coordinate Mg(2+): E1171, D1262, and E1265. One can recognise a DRBM domain in the interval 1302-1367 (DPVKGLQEFC…SKAVLKDLIA (66 aa)).

It belongs to the helicase family. Dicer subfamily. In terms of assembly, may interact with ARGONAUTE1 or PINHEAD through their common PAZ domains. It depends on Mg(2+) as a cofactor. Requires Mn(2+) as cofactor.

It is found in the nucleus. In terms of biological role, probably involved in the RNA silencing pathway. May cleave double-stranded RNA to produce short 21-24 nucleotides (nt) RNAs which target the selective destruction of complementary RNAs. The protein is Endoribonuclease Dicer homolog 2b (DCL2B) of Oryza sativa subsp. japonica (Rice).